A 313-amino-acid chain; its full sequence is Aspartate carbamoyltransferase catalytic subunit (313 aa).

Residues Arg58 and Thr59 each contribute to the carbamoyl phosphate site. Lys86 is an L-aspartate binding site. Carbamoyl phosphate is bound by residues Arg108, His136, and Gln139. Residues Arg169 and Arg223 each coordinate L-aspartate. The carbamoyl phosphate site is built by Gly265 and Pro266.

It belongs to the aspartate/ornithine carbamoyltransferase superfamily. ATCase family. Heterododecamer (2C3:3R2) of six catalytic PyrB chains organized as two trimers (C3), and six regulatory PyrI chains organized as three dimers (R2).

It carries out the reaction carbamoyl phosphate + L-aspartate = N-carbamoyl-L-aspartate + phosphate + H(+). Its pathway is pyrimidine metabolism; UMP biosynthesis via de novo pathway; (S)-dihydroorotate from bicarbonate: step 2/3. Its function is as follows. Catalyzes the condensation of carbamoyl phosphate and aspartate to form carbamoyl aspartate and inorganic phosphate, the committed step in the de novo pyrimidine nucleotide biosynthesis pathway. The chain is Aspartate carbamoyltransferase catalytic subunit from Anaeromyxobacter dehalogenans (strain 2CP-1 / ATCC BAA-258).